The following is a 351-amino-acid chain: Ubiquinol oxidase 4, chloroplastic/chromoplastic (351 aa).

The N-terminal 56 residues, 1 to 56 (MAAISGISSGTLTISRPLVTLRRSRAAVSYSSSHRLLHHLPLSSRRLLLRNNHRVQ), are a transit peptide targeting the chloroplast and chromoplast. The segment at 71–91 (ESFKAETSTGTEPLEEPNMSS) is disordered. The helical transmembrane segment at 132-152 (FFVLETIARVPYFAFMSVLHM) threads the bilayer. Fe cation is bound by residues E136, E175, and H178. A helical transmembrane segment spans residues 195 to 215 (FLAQHIATFYYFMTVFLYILS). Fe cation-binding residues include E227, E296, and H299.

The protein belongs to the alternative oxidase family. Fe cation serves as cofactor. Ubiquitous.

It is found in the plastid. It localises to the chloroplast thylakoid membrane. The protein resides in the chromoplast membrane. It carries out the reaction 2 a ubiquinol + O2 = 2 a ubiquinone + 2 H2O. In terms of biological role, acts early in chloroplast biogenesis as a component of a redox chain responsible for phytoene desaturation. Prevents the generation of toxic oxygen radicals and photooxidation of the nascent photosynthetic apparatus. Involved in the differentiation of multiple plastid types, including chloroplasts, amyloplasts, and etioplasts. Might participate in the chloroplast respiratory chain. This chain is Ubiquinol oxidase 4, chloroplastic/chromoplastic (AOX4), found in Arabidopsis thaliana (Mouse-ear cress).